Reading from the N-terminus, the 164-residue chain is MLNLFRQSGLRFLWLAVVVFVIDQVTKHWIVANLEPYQAIQYTSFFNLTHVYNYGAAFSFLSDAGGWQRWLFTGIAIAVCGLVTWWLKETTRQQVMLPVAFCLIIGGALGNVFDRLLHGFVIDFLVLYYQDWYWPAFNVADSAICLGAFLLVIDMFKNKDNVNE.

3 consecutive transmembrane segments (helical) span residues 12–32, 70–90, and 93–113; these read FLWL…WIVA, WLFT…LKET, and QQVM…GNVF. Residues Asp123 and Asp141 contribute to the active site. The helical transmembrane segment at 133 to 153 threads the bilayer; that stretch reads YWPAFNVADSAICLGAFLLVI.

Belongs to the peptidase A8 family.

The protein resides in the cell inner membrane. It carries out the reaction Release of signal peptides from bacterial membrane prolipoproteins. Hydrolyzes -Xaa-Yaa-Zaa-|-(S,diacylglyceryl)Cys-, in which Xaa is hydrophobic (preferably Leu), and Yaa (Ala or Ser) and Zaa (Gly or Ala) have small, neutral side chains.. It participates in protein modification; lipoprotein biosynthesis (signal peptide cleavage). This protein specifically catalyzes the removal of signal peptides from prolipoproteins. This Pseudoalteromonas atlantica (strain T6c / ATCC BAA-1087) protein is Lipoprotein signal peptidase.